A 276-amino-acid polypeptide reads, in one-letter code: Glutamate racemase (276 aa).

Residues 10–11 and 42–43 contribute to the substrate site; these read DS and YG. The active-site Proton donor/acceptor is Cys-74. Substrate is bound at residue 75–76; sequence NT. The Proton donor/acceptor role is filled by Cys-185. 186-187 serves as a coordination point for substrate; that stretch reads TH.

It belongs to the aspartate/glutamate racemases family.

The enzyme catalyses L-glutamate = D-glutamate. It functions in the pathway cell wall biogenesis; peptidoglycan biosynthesis. Its function is as follows. Provides the (R)-glutamate required for cell wall biosynthesis. The protein is Glutamate racemase of Levilactobacillus brevis (strain ATCC 367 / BCRC 12310 / CIP 105137 / JCM 1170 / LMG 11437 / NCIMB 947 / NCTC 947) (Lactobacillus brevis).